A 359-amino-acid chain; its full sequence is AA9 family lytic polysaccharide monooxygenase B (359 aa).

The N-terminal stretch at 1-18 (MQLFTSFSLLAVASFASA) is a signal peptide. Residues His-19 and His-102 each contribute to the Cu(2+) site. Disulfide bonds link Cys-72/Cys-190 and Cys-113/Cys-117. Asn-150 is a glycosylation site (N-linked (GlcNAc...) asparagine). The O2 site is built by His-176 and Gln-185. Tyr-187 contributes to the Cu(2+) binding site. A disordered region spans residues 241–310 (GGSPGNSAEP…STNINPTSLK (70 aa)). Residues 245 to 254 (GNSAEPQPQH) are compositionally biased toward polar residues. The span at 255-304 (TSTAVSTAKTASTSSLTTSVTITSQAPSNTANPPQSITTTTTPKPQSTNI) shows a compositional bias: low complexity. N-linked (GlcNAc...) asparagine glycosylation is present at Asn-345.

It belongs to the polysaccharide monooxygenase AA9 family. Cu(2+) serves as cofactor.

The protein resides in the secreted. It carries out the reaction [(1-&gt;4)-beta-D-glucosyl]n+m + reduced acceptor + O2 = 4-dehydro-beta-D-glucosyl-[(1-&gt;4)-beta-D-glucosyl]n-1 + [(1-&gt;4)-beta-D-glucosyl]m + acceptor + H2O.. Its function is as follows. Lytic polysaccharide monooxygenase (LPMO) that depolymerizes crystalline and amorphous polysaccharides via the oxidation of scissile alpha- or beta-(1-4)-glycosidic bonds, yielding C1 and C4 oxidation products. Catalysis by LPMOs requires the reduction of the active-site copper from Cu(II) to Cu(I) by a reducing agent and H(2)O(2) or O(2) as a cosubstrate. Active on cellulose and on xyloglucan for deconstruction of plant biomass. This chain is AA9 family lytic polysaccharide monooxygenase B, found in Geotrichum candidum (Oospora lactis).